A 72-amino-acid polypeptide reads, in one-letter code: MMFITSNINGRLIFVHDLVIFQKIKHFLNFCVVYFSQRASCCMDYAIFVFNLCFIPNLCVACIFNVATASIP.

A helical membrane pass occupies residues 46–66 (AIFVFNLCFIPNLCVACIFNV).

The protein resides in the membrane. This is an uncharacterized protein from Saccharomyces cerevisiae (strain ATCC 204508 / S288c) (Baker's yeast).